Here is a 298-residue protein sequence, read N- to C-terminus: GTP cyclohydrolase FolE2 (298 aa).

This sequence belongs to the GTP cyclohydrolase IV family.

It catalyses the reaction GTP + H2O = 7,8-dihydroneopterin 3'-triphosphate + formate + H(+). It participates in cofactor biosynthesis; 7,8-dihydroneopterin triphosphate biosynthesis; 7,8-dihydroneopterin triphosphate from GTP: step 1/1. Converts GTP to 7,8-dihydroneopterin triphosphate. The sequence is that of GTP cyclohydrolase FolE2 from Pseudomonas fluorescens (strain SBW25).